The primary structure comprises 546 residues: Phosphoglucomutase (546 aa).

S135 functions as the Phosphoserine intermediate in the catalytic mechanism. Residues S135, D288, D290, and D292 each contribute to the Mg(2+) site.

This sequence belongs to the phosphohexose mutase family. Requires Mg(2+) as cofactor.

The enzyme catalyses alpha-D-glucose 1-phosphate = alpha-D-glucose 6-phosphate. It participates in glycolipid metabolism; diglucosyl-diacylglycerol biosynthesis. Its function is as follows. Catalyzes the interconversion between glucose-6-phosphate and alpha-glucose-1-phosphate. This is the first step in the biosynthesis of diglucosyl-diacylglycerol (Glc2-DAG), i.e. a glycolipid found in the membrane, which is also used as a membrane anchor for lipoteichoic acid (LTA). This is Phosphoglucomutase (pgcA) from Staphylococcus epidermidis (strain ATCC 12228 / FDA PCI 1200).